Here is a 292-residue protein sequence, read N- to C-terminus: Secreted frizzled-related protein 2 (292 aa).

The N-terminal stretch at 1–20 (MPRRLCALLLLASQCLGSTA) is a signal peptide. The region spanning 32-152 (YKRSNCKPIP…PKDNDLCIPL (121 aa)) is the FZ domain. Disulfide bonds link cysteine 37–cysteine 100, cysteine 47–cysteine 93, cysteine 84–cysteine 122, cysteine 111–cysteine 149, cysteine 115–cysteine 139, cysteine 169–cysteine 242, and cysteine 187–cysteine 292. The region spanning 169–292 (CDACKNKNED…FSRSIRKLQC (124 aa)) is the NTR domain.

This sequence belongs to the secreted frizzled-related protein (sFRP) family.

It localises to the secreted. Functionally, soluble frizzled-related proteins (sFRPS) function as modulators of Wnt signaling through direct interaction with Wnts. They have a role in regulating cell growth and differentiation in specific cell types. SFRP2 appears to be associated with myogenesis. The polypeptide is Secreted frizzled-related protein 2 (SFRP2) (Gallus gallus (Chicken)).